A 376-amino-acid chain; its full sequence is Probable allantoicase (376 aa).

This sequence belongs to the allantoicase family.

The enzyme catalyses allantoate + H2O = (S)-ureidoglycolate + urea. It participates in nitrogen metabolism; (S)-allantoin degradation; (S)-ureidoglycolate from allantoate (aminidohydrolase route): step 1/1. The polypeptide is Probable allantoicase (Streptomyces coelicolor (strain ATCC BAA-471 / A3(2) / M145)).